A 258-amino-acid polypeptide reads, in one-letter code: ATP synthase subunit a (258 aa).

The next 6 helical transmembrane spans lie at serine 30–serine 50, phenylalanine 85–phenylalanine 105, leucine 122–phenylalanine 142, leucine 151–isoleucine 171, phenylalanine 198–isoleucine 218, and leucine 230–leucine 250.

Belongs to the ATPase A chain family. As to quaternary structure, F-type ATPases have 2 components, CF(1) - the catalytic core - and CF(0) - the membrane proton channel. CF(1) has five subunits: alpha(3), beta(3), gamma(1), delta(1), epsilon(1). CF(0) has three main subunits: a(1), b(2) and c(9-12). The alpha and beta chains form an alternating ring which encloses part of the gamma chain. CF(1) is attached to CF(0) by a central stalk formed by the gamma and epsilon chains, while a peripheral stalk is formed by the delta and b chains.

It is found in the cell inner membrane. Functionally, key component of the proton channel; it plays a direct role in the translocation of protons across the membrane. This is ATP synthase subunit a from Maricaulis maris (strain MCS10) (Caulobacter maris).